A 761-amino-acid chain; its full sequence is Phosphoribosylformylglycinamidine synthase subunit PurL (761 aa).

Residues 1-16 (MTGNPAAPAATSVSPP) show a composition bias toward low complexity. The interval 1–21 (MTGNPAAPAATSVSPPAEQPY) is disordered. The active site involves His57. ATP-binding residues include Tyr60 and Lys101. Glu103 serves as a coordination point for Mg(2+). Residues 104-107 (SHNH) and Arg126 each bind substrate. Residue His105 is the Proton acceptor of the active site. Residue Asp127 participates in Mg(2+) binding. Residue Gln252 participates in substrate binding. Asp280 is a binding site for Mg(2+). Residue 329 to 331 (ESQ) participates in substrate binding. Residues Asn519 and Gly556 each coordinate ATP. Asn557 lines the Mg(2+) pocket. Ser559 is a substrate binding site.

The protein belongs to the FGAMS family. As to quaternary structure, monomer. Part of the FGAM synthase complex composed of 1 PurL, 1 PurQ and 2 PurS subunits.

Its subcellular location is the cytoplasm. It carries out the reaction N(2)-formyl-N(1)-(5-phospho-beta-D-ribosyl)glycinamide + L-glutamine + ATP + H2O = 2-formamido-N(1)-(5-O-phospho-beta-D-ribosyl)acetamidine + L-glutamate + ADP + phosphate + H(+). The protein operates within purine metabolism; IMP biosynthesis via de novo pathway; 5-amino-1-(5-phospho-D-ribosyl)imidazole from N(2)-formyl-N(1)-(5-phospho-D-ribosyl)glycinamide: step 1/2. In terms of biological role, part of the phosphoribosylformylglycinamidine synthase complex involved in the purines biosynthetic pathway. Catalyzes the ATP-dependent conversion of formylglycinamide ribonucleotide (FGAR) and glutamine to yield formylglycinamidine ribonucleotide (FGAM) and glutamate. The FGAM synthase complex is composed of three subunits. PurQ produces an ammonia molecule by converting glutamine to glutamate. PurL transfers the ammonia molecule to FGAR to form FGAM in an ATP-dependent manner. PurS interacts with PurQ and PurL and is thought to assist in the transfer of the ammonia molecule from PurQ to PurL. The sequence is that of Phosphoribosylformylglycinamidine synthase subunit PurL from Frankia casuarinae (strain DSM 45818 / CECT 9043 / HFP020203 / CcI3).